A 227-amino-acid chain; its full sequence is Cytochrome c oxidase subunit 2 (227 aa).

The Mitochondrial intermembrane portion of the chain corresponds to 1–26 (MATWSNLSLQDGASPLMEQLSFFHDH). A helical membrane pass occupies residues 27–48 (TMIDLLLITMIVGYSLSYMLLT). The Mitochondrial matrix segment spans residues 49–62 (KYTNRNMLHGHLIE). Residues 63–82 (TIWTALPAITLIFIALPSLR) form a helical membrane-spanning segment. Residues 83–227 (LLYLLDDSSD…LFIKWLSNMM (145 aa)) are Mitochondrial intermembrane-facing. H161, C196, E198, C200, H204, and M207 together coordinate Cu cation. Position 198 (E198) interacts with Mg(2+).

Belongs to the cytochrome c oxidase subunit 2 family. As to quaternary structure, component of the cytochrome c oxidase (complex IV, CIV), a multisubunit enzyme composed of a catalytic core of 3 subunits and several supernumerary subunits. The complex exists as a monomer or a dimer and forms supercomplexes (SCs) in the inner mitochondrial membrane with ubiquinol-cytochrome c oxidoreductase (cytochrome b-c1 complex, complex III, CIII). It depends on Cu cation as a cofactor.

The protein localises to the mitochondrion inner membrane. It catalyses the reaction 4 Fe(II)-[cytochrome c] + O2 + 8 H(+)(in) = 4 Fe(III)-[cytochrome c] + 2 H2O + 4 H(+)(out). Component of the cytochrome c oxidase, the last enzyme in the mitochondrial electron transport chain which drives oxidative phosphorylation. The respiratory chain contains 3 multisubunit complexes succinate dehydrogenase (complex II, CII), ubiquinol-cytochrome c oxidoreductase (cytochrome b-c1 complex, complex III, CIII) and cytochrome c oxidase (complex IV, CIV), that cooperate to transfer electrons derived from NADH and succinate to molecular oxygen, creating an electrochemical gradient over the inner membrane that drives transmembrane transport and the ATP synthase. Cytochrome c oxidase is the component of the respiratory chain that catalyzes the reduction of oxygen to water. Electrons originating from reduced cytochrome c in the intermembrane space (IMS) are transferred via the dinuclear copper A center (CU(A)) of subunit 2 and heme A of subunit 1 to the active site in subunit 1, a binuclear center (BNC) formed by heme A3 and copper B (CU(B)). The BNC reduces molecular oxygen to 2 water molecules using 4 electrons from cytochrome c in the IMS and 4 protons from the mitochondrial matrix. This chain is Cytochrome c oxidase subunit 2 (COII), found in Locusta migratoria (Migratory locust).